We begin with the raw amino-acid sequence, 255 residues long: MRHPLVMGNWKLNGSRHMVNELVANLRKELAGVTGCAVAIAPPDMYLDLAKHAADGSHIILGAQNVDVNLSGAFTGETSAEMLKDIGAKYIIIGHSERRTYHKESDEFIAKKFAVLKEQGLIPVLCIGETEAENEAGKTEEVCARQIDAVLKTQGAAAFEGAVIAYEPVWAIGTGKSATPAQAQAVHKFIRDHIAKADAKVAEQVIIQYGGSVNASNAAELFTQPDIDGALVGGASLKADAFAVIVKAAEAAKQA.

Position 9–11 (9–11 (NWK)) interacts with substrate. H95 (electrophile) is an active-site residue. E167 (proton acceptor) is an active-site residue. Residues G173, S212, and 233-234 (GG) contribute to the substrate site.

The protein belongs to the triosephosphate isomerase family. As to quaternary structure, homodimer.

Its subcellular location is the cytoplasm. It catalyses the reaction D-glyceraldehyde 3-phosphate = dihydroxyacetone phosphate. Its pathway is carbohydrate biosynthesis; gluconeogenesis. It functions in the pathway carbohydrate degradation; glycolysis; D-glyceraldehyde 3-phosphate from glycerone phosphate: step 1/1. In terms of biological role, involved in the gluconeogenesis. Catalyzes stereospecifically the conversion of dihydroxyacetone phosphate (DHAP) to D-glyceraldehyde-3-phosphate (G3P). In Enterobacter cloacae, this protein is Triosephosphate isomerase.